A 218-amino-acid chain; its full sequence is Holliday junction branch migration complex subunit RuvA (218 aa).

Positions 1–64 (MIGKITGRLE…EDVMQLFGFT (64 aa)) are domain I. Residues 65–143 (TLTEKEWHRL…SVMGMSDTQA (79 aa)) form a domain II region. Residues 144–164 (TVAAQSSDAVIETRAAPSPVV) form a flexible linker region. A domain III region spans residues 165 to 218 (QNPSAQAEALSALSNLGYAPGDAAAAVAQAAGELPDAETPDLIRAALKRLAPKG).

This sequence belongs to the RuvA family. In terms of assembly, homotetramer. Forms an RuvA(8)-RuvB(12)-Holliday junction (HJ) complex. HJ DNA is sandwiched between 2 RuvA tetramers; dsDNA enters through RuvA and exits via RuvB. An RuvB hexamer assembles on each DNA strand where it exits the tetramer. Each RuvB hexamer is contacted by two RuvA subunits (via domain III) on 2 adjacent RuvB subunits; this complex drives branch migration. In the full resolvosome a probable DNA-RuvA(4)-RuvB(12)-RuvC(2) complex forms which resolves the HJ.

Its subcellular location is the cytoplasm. The RuvA-RuvB-RuvC complex processes Holliday junction (HJ) DNA during genetic recombination and DNA repair, while the RuvA-RuvB complex plays an important role in the rescue of blocked DNA replication forks via replication fork reversal (RFR). RuvA specifically binds to HJ cruciform DNA, conferring on it an open structure. The RuvB hexamer acts as an ATP-dependent pump, pulling dsDNA into and through the RuvAB complex. HJ branch migration allows RuvC to scan DNA until it finds its consensus sequence, where it cleaves and resolves the cruciform DNA. This Roseobacter denitrificans (strain ATCC 33942 / OCh 114) (Erythrobacter sp. (strain OCh 114)) protein is Holliday junction branch migration complex subunit RuvA.